A 586-amino-acid polypeptide reads, in one-letter code: Chaperonin 60 subunit alpha 1, chloroplastic (586 aa).

The transit peptide at 1-46 (MASANALSSASVLCSSRQSKLGGGNQQQGQRVSYNKRTIRRFSVRA) directs the protein to the chloroplast. A Phosphoserine modification is found at Ser90.

The protein belongs to the chaperonin (HSP60) family. As to quaternary structure, part of the Cpn60 complex composed of 7 alpha and 7 beta subunits. This complex shows ATPase activity. The Cpn60 complex interacts with the Cpn10 complex. Expressed in leaves, stems, siliques and flowers.

It is found in the plastid. It localises to the chloroplast. Functionally, binds RuBisCO small and large subunits and is implicated in the assembly of the enzyme oligomer. Involved in protein assisted folding. Required for proper chloroplast development. This chain is Chaperonin 60 subunit alpha 1, chloroplastic (CPN60A1), found in Arabidopsis thaliana (Mouse-ear cress).